Here is a 72-residue protein sequence, read N- to C-terminus: UPF0352 protein SO_2176 (72 aa).

This sequence belongs to the UPF0352 family.

This chain is UPF0352 protein SO_2176, found in Shewanella oneidensis (strain ATCC 700550 / JCM 31522 / CIP 106686 / LMG 19005 / NCIMB 14063 / MR-1).